Reading from the N-terminus, the 500-residue chain is Endothelial lipase (500 aa).

The signal sequence occupies residues 1 to 20 (MSNSVPLLCFWSLCYCFAAG). A disulfide bond links Cys64 and Cys77. 2 N-linked (GlcNAc...) asparagine glycosylation sites follow: Asn80 and Asn136. Catalysis depends on Ser169, which acts as the Nucleophile. The active-site Charge relay system is Asp193. Cys252 and Cys272 are disulfide-bonded. His274 (charge relay system) is an active-site residue. 2 cysteine pairs are disulfide-bonded: Cys297–Cys316 and Cys308–Cys311. Heparin is bound at residue 325-337 (KMRNKRNSKMYLK). The PLAT domain maps to 347 to 482 (YHYQMKIHVF…SPGRELWFRK (136 aa)). Residues Asn393, Asn469, and Asn491 are each glycosylated (N-linked (GlcNAc...) asparagine). Cys463 and Cys483 are disulfide-bonded.

It belongs to the AB hydrolase superfamily. Lipase family. In terms of assembly, head to tail homodimer. As to expression, high level of expression in the liver, placenta, lung, thyroid, kidney, testis and in the corpus luteum of the ovary. Expressed also in coronary artery endothelial cells, umbilical vein endothelial cells and in hepatocytes and osteosarcoma cell lines. Not detected in heart, brain and muscle.

The protein localises to the secreted. It catalyses the reaction a triacylglycerol + H2O = a diacylglycerol + a fatty acid + H(+). The catalysed reaction is a 1,2-diacyl-sn-glycero-3-phosphocholine + H2O = a 2-acyl-sn-glycero-3-phosphocholine + a fatty acid + H(+). The enzyme catalyses 1,2,3-tri-(9Z-octadecenoyl)-glycerol + H2O = di-(9Z)-octadecenoylglycerol + (9Z)-octadecenoate + H(+). It carries out the reaction 1,2,3-tributanoylglycerol + H2O = dibutanoylglycerol + butanoate + H(+). It catalyses the reaction 1,2-dihexadecanoyl-sn-glycero-3-phosphocholine + H2O = hexadecanoyl-sn-glycero-3-phosphocholine + hexadecanoate + H(+). Inhibited by serum and NaCl. Exerts both phospholipase and triglyceride lipase activities. More active as a phospholipase than a triglyceride lipase. Hydrolyzes triglycerides, both with short-chain fatty acyl groups (tributyrin) and long-chain fatty acyl groups (triolein) with similar levels of activity toward both types of substrates. Hydrolyzes high density lipoproteins (HDL) more efficiently than other lipoproteins. The sequence is that of Endothelial lipase (LIPG) from Homo sapiens (Human).